We begin with the raw amino-acid sequence, 312 residues long: Cobalamin biosynthesis protein CobD (312 aa).

The next 4 membrane-spanning stretches (helical) occupy residues Ile61–Leu81, Ile83–Ala103, Asp152–Tyr172, and Gly292–Ala312.

Belongs to the CobD/CbiB family.

Its subcellular location is the cell membrane. It functions in the pathway cofactor biosynthesis; adenosylcobalamin biosynthesis. Its function is as follows. Converts cobyric acid to cobinamide by the addition of aminopropanol on the F carboxylic group. The sequence is that of Cobalamin biosynthesis protein CobD from Chromobacterium violaceum (strain ATCC 12472 / DSM 30191 / JCM 1249 / CCUG 213 / NBRC 12614 / NCIMB 9131 / NCTC 9757 / MK).